The primary structure comprises 303 residues: MGQCVTKCKNPSSTLGSKNGERESSKPHKRSSSHKDEHLSICGKASREILVNGTKKGDVSLEASQPLAAGGDTKKKEQGTGAELSSVQRIEELFWRYKDEREDAILEEGMERFCNDLYVDPTEFRVLVLAWKFQAATMCKFTRREFFEGCKAINADGIEGICARFPSLLNEAKQEDKFKDLYRFTFQFGLDSEEGQRSLHREIAIALWKLVFTQNKPLILDQWLDFLTENPSGIKGISRDTWNMFLNFTQVIGPDLSNYSEDEAWPSLFDTFVEWEMERRKNEEETKCIPCSGTDDQSTEGQT.

2 disordered regions span residues 1-41 and 62-83; these read MGQC…HLSI and EASQ…TGAE. Glycine 2 carries N-myristoyl glycine lipidation. One can recognise a DCUN1 domain in the interval 85–277; that stretch reads SSVQRIEELF…LFDTFVEWEM (193 aa). The tract at residues 284-303 is disordered; sequence EETKCIPCSGTDDQSTEGQT. Residues 294 to 303 are compositionally biased toward polar residues; that stretch reads TDDQSTEGQT.

In terms of assembly, may interact (via the DCUN1 domain) with unneddylated cullins.

It is found in the cell membrane. It localises to the cytoplasm. Its subcellular location is the nucleus. The protein resides in the perinuclear region. In terms of biological role, contributes to the neddylation of all cullins by transferring NEDD8 from N-terminally acetylated NEDD8-conjugating E2s enzyme to different cullin C-terminal domain-RBX complexes. At the cell membrane, can promote and as well inhibit cullins neddylation. The chain is DCN1-like protein 3 from Xenopus tropicalis (Western clawed frog).